The sequence spans 568 residues: Cyclin-dependent kinase-like 2 (568 aa).

In terms of domain architecture, Protein kinase spans 4 to 289 (YENLGLVGEG…CADLLRHDFF (286 aa)). ATP is bound by residues 10–18 (VGEGSYGMV) and K33. Positions 45–51 (KKIAMRE) match the [NKR]KIAxRE motif. Residue D126 is the Proton acceptor of the active site. Disordered stretches follow at residues 309–333 (DARN…LGEE) and 545–568 (SHQG…EHQH). The span at 322–333 (RKKEKDDALGEE) shows a compositional bias: basic and acidic residues.

It belongs to the protein kinase superfamily. CMGC Ser/Thr protein kinase family. CDC2/CDKX subfamily. In terms of tissue distribution, expressed in testis, kidney, lung and brain.

It localises to the cytoplasm. Its subcellular location is the nucleus. The enzyme catalyses L-seryl-[protein] + ATP = O-phospho-L-seryl-[protein] + ADP + H(+). The catalysed reaction is L-threonyl-[protein] + ATP = O-phospho-L-threonyl-[protein] + ADP + H(+). This is Cyclin-dependent kinase-like 2 from Mus musculus (Mouse).